A 1791-amino-acid chain; its full sequence is 1-phosphatidylinositol-3-phosphate 5-kinase FAB1B (1791 aa).

The FYVE-type zinc-finger motif lies at aspartate 39 to glutamate 105. Zn(2+) is bound by residues cysteine 45, cysteine 48, cysteine 61, cysteine 64, cysteine 69, cysteine 72, cysteine 97, and cysteine 100. Disordered stretches follow at residues histidine 166 to serine 186, glutamate 279 to threonine 370, serine 770 to valine 790, and glutamine 834 to serine 859. Residues glutamate 279 to cysteine 293 show a composition bias toward basic and acidic residues. Over residues proline 324–alanine 345 the composition is skewed to acidic residues. Basic and acidic residues predominate over residues glutamate 838–phenylalanine 850. Residues glutamate 1077–asparagine 1111 adopt a coiled-coil conformation. Residues asparagine 1151–proline 1164 show a composition bias toward basic and acidic residues. The tract at residues asparagine 1151–valine 1242 is disordered. Composition is skewed to polar residues over residues lysine 1167–asparagine 1188 and threonine 1196–glutamine 1206. The region spanning serine 1433 to phenylalanine 1758 is the PIPK domain. Positions asparagine 1769 to glutamate 1791 are disordered. The segment covering valine 1771–glutamate 1791 has biased composition (polar residues).

In terms of assembly, component of the PI(3,5)P2 regulatory complex at least composed of ATG18, SAC/FIG4, FAB1 and VAC14. The cofactor is Mg(2+). Mn(2+) serves as cofactor. Ubiquitous with highest expression levels in the root hair zone, pollen, and stamens.

The protein localises to the endosome membrane. It carries out the reaction a 1,2-diacyl-sn-glycero-3-phospho-(1D-myo-inositol-3-phosphate) + ATP = a 1,2-diacyl-sn-glycero-3-phospho-(1D-myo-inositol-3,5-bisphosphate) + ADP + H(+). Its function is as follows. The PI(3,5)P2 regulatory complex regulates both the synthesis and turnover of phosphatidylinositol 3,5-bisphosphate (PtdIns(3,5)P2). Catalyzes the phosphorylation of phosphatidylinositol 3-phosphate on the fifth hydroxyl of the myo-inositol ring, to form phosphatidylinositol 3,5-bisphosphate. Plays an important role in maintenance of endomembrane homeostasis including endocytosis, vacuole formation, and vacuolar acidification processes. Required for development of viable pollen. Might mediate recycling of auxin transporters. In Arabidopsis thaliana (Mouse-ear cress), this protein is 1-phosphatidylinositol-3-phosphate 5-kinase FAB1B (FAB1B).